The chain runs to 242 residues: MTLNPLVQFDIKKLIEIKIFGFDISFTNSSIYMLLASILALTYFYLAFYNWKLVPSRLQVSAEIVYNLVADMLNQNIGAKGHKFIPLFFSLFIFILFCNLLGMTPYSFTVTSHIIVTFALAILVFLTITIVGFVKHSLRFLTLFLPHGTPLWLAPLMIVIELFTYLARPISLSLRLAANMMAGHVLLKVIASFTISLMIYLKFISIPLMVILIGFEIFIAVLQAYIFTILSCMYLNDAINLH.

6 consecutive transmembrane segments (helical) span residues 31-51 (IYML…FYNW), 84-104 (FIPL…LGMT), 114-134 (IIVT…VGFV), 140-160 (FLTL…MIVI), 189-209 (VIAS…IPLM), and 210-230 (VILI…FTIL).

This sequence belongs to the ATPase A chain family. As to quaternary structure, F-type ATPases have 2 components, CF(1) - the catalytic core - and CF(0) - the membrane proton channel. CF(1) has five subunits: alpha(3), beta(3), gamma(1), delta(1), epsilon(1). CF(0) has three main subunits: a(1), b(2) and c(9-12). The alpha and beta chains form an alternating ring which encloses part of the gamma chain. CF(1) is attached to CF(0) by a central stalk formed by the gamma and epsilon chains, while a peripheral stalk is formed by the delta and b chains.

It is found in the cell inner membrane. Functionally, key component of the proton channel; it plays a direct role in the translocation of protons across the membrane. The chain is ATP synthase subunit a from Rickettsia canadensis (strain McKiel).